The chain runs to 138 residues: Basic phospholipase A2 beta-bungarotoxin A-AL3 chain (138 aa).

A signal peptide spans 1 to 10; it reads LAVCVSLIGA. A propeptide spanning residues 11 to 18 is cleaved from the precursor; that stretch reads ANIPPQHL. 6 disulfide bridges follow: cysteine 45–cysteine 137, cysteine 47–cysteine 63, cysteine 62–cysteine 118, cysteine 69–cysteine 111, cysteine 79–cysteine 104, and cysteine 97–cysteine 109. Ca(2+)-binding residues include tyrosine 46, glycine 48, and glycine 50. Residue histidine 66 is part of the active site. Ca(2+) is bound at residue aspartate 67. Aspartate 112 is an active-site residue.

This sequence belongs to the phospholipase A2 family. Group I subfamily. D49 sub-subfamily. In terms of assembly, heterodimer; disulfide-linked. The A chains have phospholipase A2 activity and the B chains show homology with the basic protease inhibitors. Ca(2+) serves as cofactor. In terms of tissue distribution, expressed by the venom gland.

The protein localises to the secreted. It carries out the reaction a 1,2-diacyl-sn-glycero-3-phosphocholine + H2O = a 1-acyl-sn-glycero-3-phosphocholine + a fatty acid + H(+). Functionally, snake venom phospholipase A2 (PLA2) that inhibits neuromuscular transmission by blocking acetylcholine release from the nerve termini. PLA2 catalyzes the calcium-dependent hydrolysis of the 2-acyl groups in 3-sn-phosphoglycerides. The polypeptide is Basic phospholipase A2 beta-bungarotoxin A-AL3 chain (Bungarus multicinctus (Many-banded krait)).